The chain runs to 505 residues: MNVQVLDRYEIVKSLGSGGFGDTFLAKDTQIPSQKLVVIKRLKPANANSNTSTELIQKLFEKEASVLEDLGEHNSQIPKLYSYFSNDNEFYLVQEYIQGVSLNEIAPISSEQAKTILSSLLTTLKYIHSKGIIHRDIKPENIILRDSDHLPVLIDFGAVKETMGAVTLGSGSTVSSVVIGTRGFMAPEQSSGRSVFSTDLYALGLTIIYTLTKKLPVEFSSDQQTGQLDWQSHVSKIDSVLAKVINKAIEMEPSRRYSSAEAMYQALHSLISSGAEPALPMETVRVAPSNEFLVTRSSTKTAETVVKPVGNSHNNYSNNNGKSKIATLLTVLIGIIVVTAGLGGGFIITQQIKEAEARAAQAEKEKQEAEQKRIEAEQKIAENEKRQRELEQKRVEEERQRLAAEAERAKQERQRLAAERQRVQVLANQAKAMASGASATIGGIPGSKNIRSGPGTDYGVITQGYTGEGLDILDSSTDSSGHVWYKVYHYGSGSTGWIASQLVNF.

Positions 9–271 (YEIVKSLGSG…AMYQALHSLI (263 aa)) constitute a Protein kinase domain. Residues 15–23 (LGSGGFGDT) and lysine 40 each bind ATP. Catalysis depends on aspartate 136, which acts as the Proton acceptor. Residues 436–505 (GASATIGGIP…GWIASQLVNF (70 aa)) form the SH3b domain.

This sequence belongs to the protein kinase superfamily. Ser/Thr protein kinase family.

The catalysed reaction is L-seryl-[protein] + ATP = O-phospho-L-seryl-[protein] + ADP + H(+). It carries out the reaction L-threonyl-[protein] + ATP = O-phospho-L-threonyl-[protein] + ADP + H(+). In Synechocystis sp. (strain ATCC 27184 / PCC 6803 / Kazusa), this protein is Serine/threonine-protein kinase D (spkD).